A 497-amino-acid polypeptide reads, in one-letter code: Probable 26S proteasome regulatory subunit rpn3 (497 aa).

The tract at residues 1–27 (MIDDQRDMQVDSVNQEENVDSGETKQN) is disordered. In terms of domain architecture, PCI spans 248 to 428 (IRYQYYLGRI…AFMASNEAMD (181 aa)). Basic and acidic residues predominate over residues 470–483 (GVEEARRRMDKEMA). The interval 470-497 (GVEEARRRMDKEMAEADLDDDEPDLGEF) is disordered. The span at 484–497 (EADLDDDEPDLGEF) shows a compositional bias: acidic residues.

It belongs to the proteasome subunit S3 family. The 26S proteasome is composed of a core protease, known as the 20S proteasome, capped at one or both ends by the 19S regulatory complex (RC). The RC is composed of at least 18 different subunits in two subcomplexes, the base and the lid, which form the portions proximal and distal to the 20S proteolytic core, respectively.

Acts as a regulatory subunit of the 26 proteasome which is involved in the ATP-dependent degradation of ubiquitinated proteins. This Schizosaccharomyces pombe (strain 972 / ATCC 24843) (Fission yeast) protein is Probable 26S proteasome regulatory subunit rpn3 (rpn3).